Reading from the N-terminus, the 257-residue chain is Short chain dehydrogenase prhI (257 aa).

A helical membrane pass occupies residues 7 to 29 (HVVIITGSSSGIGLAASTLALAS). Residue Ile11 participates in NADP(+) binding. Residue Asn50 is glycosylated (N-linked (GlcNAc...) asparagine). Position 57 (Asp57) interacts with NADP(+). Residues Asn92 and Asn110 are each glycosylated (N-linked (GlcNAc...) asparagine). 4 residues coordinate NADP(+): Arg119, Tyr151, Lys155, and Val184. Tyr151 serves as the catalytic Proton acceptor. Lys155 serves as the catalytic Lowers pKa of active site Tyr.

It belongs to the short-chain dehydrogenases/reductases (SDR) family.

The protein resides in the membrane. It catalyses the reaction protoaustinoid A + A = protoaustinoid B + AH2. The protein operates within secondary metabolite biosynthesis; terpenoid biosynthesis. Its function is as follows. Short chain dehydrogenase; part of the gene cluster that mediates the biosynthesis of paraherquonin, a meroterpenoid with a unique, highly congested hexacyclic molecular architecture. The first step of the pathway is the synthesis of 3,5-dimethylorsellinic acid (DMOA) by the polyketide synthase prhL. Synthesis of DMOA is followed by farnesylation by the prenyltransferase prhE, methylesterification by the methyl-transferase prhM, epoxidation of the prenyl chain by the flavin-dependent monooxygenase prhF, and cyclization of the farnesyl moiety by the terpene cyclase prhH, to yield the tetracyclic intermediate, protoaustinoid A. The short chain dehydrogenase prhI then oxidizes the C-3 alcohol group of the terpene cyclase product to transform protoaustinoid A into protoaustinoid B. The FAD-binding monooxygenase prhJ catalyzes the oxidation of protoaustinoid B into preaustinoid A which is further oxidized into preaustinoid A1 by FAD-binding monooxygenase phrK. Finally, prhA leads to berkeleydione via the berkeleyone B intermediate. PrhA is a multifunctional dioxygenase that first desaturates at C5-C6 to form berkeleyone B, followed by rearrangement of the A/B-ring to form the cycloheptadiene moiety in berkeleydione. Berkeleydione serves as the key intermediate for the biosynthesis of paraherquonin as well as many other meroterpenoids. The cytochrome P450 monooxygenases prhB, prhD, and prhN, as well as the isomerase prhC, are probably involved in the late stage of paraherquonin biosynthesis, after the production of berkeleydione. Especially prhC might be a multifunctional enzyme that catalyzes the D-ring expansion via intramolecular methoxy rearrangement, as well as the hydrolysis of the expanded D-ring. The polypeptide is Short chain dehydrogenase prhI (Penicillium brasilianum).